The chain runs to 539 residues: Protein TIC 55, chloroplastic (539 aa).

The N-terminal 50 residues, Met-1–Ser-50, are a transit peptide targeting the chloroplast. Position 51 is an N-acetylalanine (Ala-51). Residues Ala-51–Asn-482 lie on the Stromal side of the membrane. The region spanning Trp-88–Val-193 is the Rieske domain. Cys-129, His-131, Cys-148, and His-151 together coordinate [2Fe-2S] cluster. Fe cation contacts are provided by His-242 and His-247. A Redox-active motif motif is present at residues Cys-467–Cys-470. Residues Ile-483–Ser-500 form a helical membrane-spanning segment. Residues Arg-501–Lys-504 lie on the Chloroplast intermembrane side of the membrane. The helical transmembrane segment at Ala-505 to Leu-527 threads the bilayer. The Stromal portion of the chain corresponds to Asn-528–Leu-539.

In terms of assembly, part of the Tic complex. Interacts with TIC62 and TIC110. [2Fe-2S] cluster is required as a cofactor. As to expression, highly expressed in green tissues and very low levels in non-photosynthetic tissues such as roots and etiolated seedlings.

It localises to the plastid. The protein resides in the chloroplast inner membrane. In terms of biological role, involved in protein precursor import into chloroplasts. Part of the redox regulon consisting of TIC32, TIC 55 and TIC62. In Arabidopsis thaliana (Mouse-ear cress), this protein is Protein TIC 55, chloroplastic (TIC55).